A 199-amino-acid polypeptide reads, in one-letter code: Large ribosomal subunit protein bL25 (199 aa).

It belongs to the bacterial ribosomal protein bL25 family. CTC subfamily. Part of the 50S ribosomal subunit; part of the 5S rRNA/L5/L18/L25 subcomplex. Contacts the 5S rRNA. Binds to the 5S rRNA independently of L5 and L18.

Functionally, this is one of the proteins that binds to the 5S RNA in the ribosome where it forms part of the central protuberance. The polypeptide is Large ribosomal subunit protein bL25 (Nostoc punctiforme (strain ATCC 29133 / PCC 73102)).